The primary structure comprises 357 residues: Protein RecA (357 aa).

ATP is bound at residue 71–78 (GPESSGKT).

This sequence belongs to the RecA family.

Its subcellular location is the cytoplasm. Functionally, can catalyze the hydrolysis of ATP in the presence of single-stranded DNA, the ATP-dependent uptake of single-stranded DNA by duplex DNA, and the ATP-dependent hybridization of homologous single-stranded DNAs. It interacts with LexA causing its activation and leading to its autocatalytic cleavage. This Ehrlichia chaffeensis (strain ATCC CRL-10679 / Arkansas) protein is Protein RecA.